Here is a 104-residue protein sequence, read N- to C-terminus: Large ribosomal subunit protein uL23 (104 aa).

The protein belongs to the universal ribosomal protein uL23 family. In terms of assembly, part of the 50S ribosomal subunit. Contacts protein L29, and trigger factor when it is bound to the ribosome.

One of the early assembly proteins it binds 23S rRNA. One of the proteins that surrounds the polypeptide exit tunnel on the outside of the ribosome. Forms the main docking site for trigger factor binding to the ribosome. This is Large ribosomal subunit protein uL23 from Burkholderia multivorans (strain ATCC 17616 / 249).